The chain runs to 234 residues: GTP cyclohydrolase 1 type 2 homolog (234 aa).

Residues His-61, His-62, Asp-80, His-195, and Glu-199 each coordinate a divalent metal cation.

The protein belongs to the GTP cyclohydrolase I type 2/NIF3 family. Homohexamer.

This Methanothermobacter thermautotrophicus (strain ATCC 29096 / DSM 1053 / JCM 10044 / NBRC 100330 / Delta H) (Methanobacterium thermoautotrophicum) protein is GTP cyclohydrolase 1 type 2 homolog.